Consider the following 255-residue polypeptide: F-box only protein 44 (255 aa).

Positions 3–50 constitute an F-box domain; that stretch reads VGNINELPENILLELFTHVPARQLLLNCRLVCSLWRDLIDLVTLWKRK. Residues 71–252 form the FBA domain; the sequence is FYFLRSLHRN…VTNSSITIGP (182 aa).

In terms of assembly, part of a SCF (SKP1-cullin-F-box) protein ligase complex. Interacts with SKP1 and CUL1. As to expression, abundantly expressed in brain and kidney. Expressed at lower levels in heart, spleen and liver.

In terms of biological role, substrate-recognition component of the SCF (SKP1-CUL1-F-box protein)-type E3 ubiquitin ligase complex. The polypeptide is F-box only protein 44 (FBXO44) (Homo sapiens (Human)).